The following is a 61-amino-acid chain: Statherin (61 aa).

The signal sequence occupies residues 1–19 (MXFLXFXLXLLXMXXMXXX). The interval 20–25 (DSSEEK) is hydroxyapatite-binding; inhibits crystal growth. 2 positions are modified to phosphoserine: Ser21 and Ser22. Positions 37–61 (RYGPYQPFAPQPLYPQPYQPYQPQY) are disordered. The tract at residues 37-61 (RYGPYQPFAPQPLYPQPYQPYQPQY) is hydrophobic; inhibits precipitation of calcium phosphate salts. Residues 43 to 61 (PFAPQPLYPQPYQPYQPQY) are compositionally biased toward pro residues.

The protein belongs to the histatin/statherin family. In terms of tissue distribution, secreted by parotid and submandibular glands.

It is found in the secreted. In terms of biological role, salivary protein that stabilizes saliva supersaturated with calcium salts by inhibiting the precipitation of calcium phosphate salts. It also modulates hydroxyapatite crystal formation on the tooth surface. The polypeptide is Statherin (STATH) (Macaca fascicularis (Crab-eating macaque)).